A 182-amino-acid chain; its full sequence is Guanylate kinase (182 aa).

Residues 2–180 (GTLTVITGPS…ALLKLEGLMG (179 aa)) enclose the Guanylate kinase-like domain. 9 to 16 (GPSGVGKG) is a binding site for ATP.

Belongs to the guanylate kinase family.

Its subcellular location is the cytoplasm. It catalyses the reaction GMP + ATP = GDP + ADP. It carries out the reaction dZMP + ATP = dZDP + ADP. The protein operates within purine metabolism. Its function is as follows. Essential for recycling GMP and indirectly, cGMP. In terms of biological role, (Microbial infection) Catalyzes the phosphorylation of dZMP to dZDP, when the bacterium is infected by a phage that produces the substrate for the synthesis of dZTP (2- amino-2'-deoxyadenosine 5'-triphosphate), which is then used by the phage as a DNA polymerase substrate. The polypeptide is Guanylate kinase (Parasynechococcus marenigrum (strain WH8102)).